A 603-amino-acid chain; its full sequence is MTKDIIAYANNETLVDTQSFNNDTNLTPIYFDNSKESLEVIRHSCAHLMAQAIKSLYPEAKFFVGPVIEDGFYYDFRVDSKISEEDLSKIEKKMKELAEAKLDITKYELSKAEVKEKFANDDLKQEVLLRIPDGKVSIYKQGEFEDLCRGPHVPNTKYLRFFKLTRVAGAYLGGDEKREMLTRIYGTAFADKESLNEYLKIIEEAKKRDHRKLGNEMKLFAFDDEIGGGLPIWLSNGAKLRSKLEHLLYKAHRLRGYEPVRGPELLKADAWKISGHYANYKENMYFTQIDEQEYGIKPMNCVGHIKIYQSDVRSYRDLPLKFFEYGVVHRHEKSGVLHGLFRVREFTQDDAHIFCMPSQIKEQVLEILSFVDTLMKAFGFDYEMEISTRPAKAIGDDEIWDIATNALKQALDEQGLKYGIDEGGGAFYGPKIDIKITDALKRKWQCGTIQVDFNLPSRFKLEYTDADNEKKQPVMLHRAILGSFERFIGILIEHCAGELPFFIAPTQVAIVPISQNHHEYAKEIAKKLLELGIDSEVYSKNESLNKKIRTAEKAHVPMILVLGDEEVANKSVALRDRRAKEQKTLTLDEFITLTKEKLSEVRF.

The segment at 209-500 is catalytic; it reads DHRKLGNEMK…LIEHCAGELP (292 aa). Cys-301, His-352, and His-477 together coordinate Zn(2+).

The protein belongs to the class-II aminoacyl-tRNA synthetase family. Homodimer. The cofactor is Zn(2+).

The protein resides in the cytoplasm. It carries out the reaction tRNA(Thr) + L-threonine + ATP = L-threonyl-tRNA(Thr) + AMP + diphosphate + H(+). Its function is as follows. Catalyzes the attachment of threonine to tRNA(Thr) in a two-step reaction: L-threonine is first activated by ATP to form Thr-AMP and then transferred to the acceptor end of tRNA(Thr). Also edits incorrectly charged L-seryl-tRNA(Thr). The chain is Threonine--tRNA ligase from Campylobacter lari (strain RM2100 / D67 / ATCC BAA-1060).